Consider the following 205-residue polypeptide: MSVGILGTKVGMTQFFDETGLSIPVTVIQVGPCVITQIKSMSTDGYNAIQVGYKQVVEQKLSKPLLGHLKKSQSPPLKYLREYLVESIEDFEVSQVFSTNIFEVGQKVNVSSKSIGKGFSGYQKRHHFSRGPMSHGSKNHRQPGSIGAGTTPGRVYPGKNMAGQMGNKKVTIKNLQIVSINIENDLLLLKGAVPGKQGALVKVSK.

The interval 127–153 (HFSRGPMSHGSKNHRQPGSIGAGTTPG) is disordered.

This sequence belongs to the universal ribosomal protein uL3 family. In terms of assembly, part of the 50S ribosomal subunit.

It localises to the plastid. It is found in the chloroplast. Functionally, one of the primary rRNA binding proteins, it binds directly near the 3'-end of the 23S rRNA, where it nucleates assembly of the 50S subunit. This is Large ribosomal subunit protein uL3c (rpl3) from Porphyra purpurea (Red seaweed).